A 249-amino-acid chain; its full sequence is Early E1A protein (249 aa).

The interaction with RB1 in competition with E2F1 stretch occupies residues 38 to 46; that stretch reads MSLHDLFDV. The interaction with UBE2I stretch occupies residues 74 to 131; sequence SAAESGSGDSGVGEELLPVDLDLKCYEDGLPPSDPETDEATEAEEEAAMPTYVNENEN. The short motif at 96-100 is the LXCXE motif, interaction with host RB1 and TMEM173/STING element; that stretch reads LKCYE. A zinc finger spans residues 145 to 165; it reads CRACDFHRGTSGNPEAMCALC. Positions 180 to 203 are disordered; that stretch reads DAEGESESGSPEDTDFPHPLTATP. Acidic residues predominate over residues 181–193; sequence AEGESESGSPEDT. A PXDLS motif, CTBP-binding motif is present at residues 238–242; sequence PLNLS. A Nuclear localization signal motif is present at residues 244–248; that stretch reads KRPKC.

Belongs to the adenoviridae E1A protein family. As to quaternary structure, interacts with host UBE2I; this interaction interferes with polySUMOylation. Interacts with host RB1; this interaction induces the aberrant dissociation of RB1-E2F1 complex thereby disrupting the activity of RB1 and activating E2F1-regulated genes. Interacts with host ATF7; the interaction enhances ATF7-mediated viral transactivation activity which requires the zinc binding domains of both proteins. Isoform early E1A 32 kDa protein and isoform early E1A 26 kDa protein interact (via N-terminus) with CUL1 and E3 ubiquitin ligase RBX1; these interactions inhibit RBX1-CUL1-dependent elongation reaction of ubiquitin chains and attenuate ubiquitination of SCF(FBXW7) target proteins. Interacts (via PXLXP motif) with host ZMYND11/BS69 (via MYND-type zinc finger); this interaction inhibits E1A mediated transactivation. Interacts with host EP300; this interaction stimulates the acetylation of RB1 by recruiting EP300 and RB1 into a multimeric-protein complex. Interacts with host CTBP1 and CTBP2; this interaction seems to potentiate viral replication. Interacts with host DCAF7. Interacts with host DYRK1A. Interacts with host KPNA4; this interaction allows E1A import into the host nucleus. Interacts with host EP400; this interaction stabilizes MYC. Interacts with host TBP protein; this interaction probably disrupts the TBP-TATA complex. Interacts (via LXCXE motif) with host TMEM173/STING; this interaction impairs the ability of TMEM173/STING to sense cytosolic DNA and promote the production of type I interferon (IFN-alpha and IFN-beta). Interacts (via C-terminus) with host ZBED1/hDREF (via C-terminus); the interaction is direct.

It localises to the host nucleus. Plays a role in viral genome replication by driving entry of quiescent cells into the cell cycle. Stimulation of progression from G1 to S phase allows the virus to efficiently use the cellular DNA replicating machinery to achieve viral genome replication. E1A protein has both transforming and trans-activating activities. Induces the disassembly of the E2F1 transcription factor from RB1 by direct competition for the same binding site on RB1, with subsequent transcriptional activation of E2F1-regulated S-phase genes and of the E2 region of the adenoviral genome. Release of E2F1 leads to the ARF-mediated inhibition of MDM2 and causes TP53/p53 to accumulate because it is not targeted for degradation by MDM2-mediated ubiquitination anymore. This increase in TP53, in turn, would arrest the cell proliferation and direct its death but this effect is counteracted by the viral protein E1B-55K. Inactivation of the ability of RB1 to arrest the cell cycle is critical for cellular transformation, uncontrolled cellular growth and proliferation induced by viral infection. Interaction with RBX1 and CUL1 inhibits ubiquitination of the proteins targeted by SCF(FBXW7) ubiquitin ligase complex, and may be linked to unregulated host cell proliferation. The tumorigenesis-restraining activity of E1A may be related to the disruption of the host CtBP-CtIP complex through the CtBP binding motif. Interaction with host TMEM173/STING impairs the ability of TMEM173/STING to sense cytosolic DNA and promote the production of type I interferon (IFN-alpha and IFN-beta). Promotes the sumoylation of host ZBED1/hDREF with SUMO1. The polypeptide is Early E1A protein (Homo sapiens (Human)).